A 306-amino-acid polypeptide reads, in one-letter code: MIKQRTLQQAISTTGVGLHKGNKVNLTLRPAPANTGLIFRRVDLDPVVDIPARADWVRDTQLCTCLINEENVRVSTVEHLLAALAGVGIDNAIIEVDSHEIPIMDGSSHPFVYLLQSAGIEEQSAAKKFIRIKQPVRVEDGDKWAELLPHDGFRIDFAIDFEHPAIADTGQTVSIDFSANAFIKEISRARTFGFMKDIEYLRENNLALGGSFDNAVVLDEFRILNSDGLRYDDEFVKHKMLDAIGDLYMGGHSILGHLRAYKSGHALNNQLLQALLAQQSAWEFVTFDEEQATAPIAFWSPATTTA.

3 residues coordinate Zn(2+): His79, His238, and Asp242. The active-site Proton donor is the His265.

Belongs to the LpxC family. Requires Zn(2+) as cofactor.

It carries out the reaction a UDP-3-O-[(3R)-3-hydroxyacyl]-N-acetyl-alpha-D-glucosamine + H2O = a UDP-3-O-[(3R)-3-hydroxyacyl]-alpha-D-glucosamine + acetate. It functions in the pathway glycolipid biosynthesis; lipid IV(A) biosynthesis; lipid IV(A) from (3R)-3-hydroxytetradecanoyl-[acyl-carrier-protein] and UDP-N-acetyl-alpha-D-glucosamine: step 2/6. Catalyzes the hydrolysis of UDP-3-O-myristoyl-N-acetylglucosamine to form UDP-3-O-myristoylglucosamine and acetate, the committed step in lipid A biosynthesis. The polypeptide is UDP-3-O-acyl-N-acetylglucosamine deacetylase (Idiomarina loihiensis (strain ATCC BAA-735 / DSM 15497 / L2-TR)).